The primary structure comprises 432 residues: Adenylosuccinate synthetase (432 aa).

GTP contacts are provided by residues 12–18 (GDEGKGK) and 40–42 (GHT). D13 functions as the Proton acceptor in the catalytic mechanism. D13 and G40 together coordinate Mg(2+). IMP-binding positions include 13–16 (DEGK), 38–41 (NAGH), T130, R144, Q225, T240, and R304. Catalysis depends on H41, which acts as the Proton donor. A substrate-binding site is contributed by 300-306 (ATTGRPR). GTP contacts are provided by residues R306, 332 to 334 (KLD), and 414 to 416 (SVG).

The protein belongs to the adenylosuccinate synthetase family. As to quaternary structure, homodimer. Mg(2+) is required as a cofactor.

It localises to the cytoplasm. The catalysed reaction is IMP + L-aspartate + GTP = N(6)-(1,2-dicarboxyethyl)-AMP + GDP + phosphate + 2 H(+). It participates in purine metabolism; AMP biosynthesis via de novo pathway; AMP from IMP: step 1/2. Its function is as follows. Plays an important role in the de novo pathway of purine nucleotide biosynthesis. Catalyzes the first committed step in the biosynthesis of AMP from IMP. This is Adenylosuccinate synthetase from Anaeromyxobacter dehalogenans (strain 2CP-1 / ATCC BAA-258).